The following is a 249-amino-acid chain: MILCVPGPHPLLAEEKIQRLSLRGIAEDLTEHIMQPLPVPAFPEEPAPTFAAPEPDGSAPQTRDPEEDLLCIAKTFSYLRESGWYWGSITASEAKQHLQKMPEGTFLVRDSTHPSYLFTLSVKTNRGPTNVRIEYADSKFRLDSNYLSKPRILAFPDVVSLIQHYVTSCTTESKSEAPYPPPAPLPPVQKEVAVAAVHLKLLRPLGRRDSIPSLQHLCRLRINRCTTEVERLPLPRRMGDYLKQYPFQL.

The interval 41-64 (AFPEEPAPTFAAPEPDGSAPQTRD) is disordered. The SH2 domain maps to 84–165 (WYWGSITASE…PDVVSLIQHY (82 aa)). Positions 200-248 (KLLRPLGRRDSIPSLQHLCRLRINRCTTEVERLPLPRRMGDYLKQYPFQ) constitute an SOCS box domain.

It participates in protein modification; protein ubiquitination. In terms of biological role, SOCS family proteins form part of a classical negative feedback system that regulates cytokine signal transduction. CIS is involved in the negative regulation of cytokines that signal through the JAK-STAT5 pathway such as erythropoietin, prolactin and interleukin 3 (IL3) receptor. Inhibits STAT5 trans-activation by suppressing its tyrosine phosphorylation. May be a substrate-recognition component of a SCF-like ECS (Elongin BC-CUL2/5-SOCS-box protein) E3 ubiquitin-protein ligase complex which mediates the ubiquitination and subsequent proteasomal degradation of target proteins. This Gallus gallus (Chicken) protein is Cytokine-inducible SH2-containing protein (CISH).